The chain runs to 238 residues: Pyridoxine 5'-phosphate synthase (238 aa).

Asparagine 7 is a binding site for 3-amino-2-oxopropyl phosphate. A 1-deoxy-D-xylulose 5-phosphate-binding site is contributed by 9–10 (DH). Arginine 18 contacts 3-amino-2-oxopropyl phosphate. Residue histidine 43 is the Proton acceptor of the active site. 1-deoxy-D-xylulose 5-phosphate contacts are provided by arginine 45 and histidine 50. The active-site Proton acceptor is glutamate 70. 1-deoxy-D-xylulose 5-phosphate is bound at residue threonine 100. The Proton donor role is filled by histidine 190. Residues glycine 191 and 212-213 (GH) each bind 3-amino-2-oxopropyl phosphate.

The protein belongs to the PNP synthase family. As to quaternary structure, homooctamer; tetramer of dimers.

Its subcellular location is the cytoplasm. It catalyses the reaction 3-amino-2-oxopropyl phosphate + 1-deoxy-D-xylulose 5-phosphate = pyridoxine 5'-phosphate + phosphate + 2 H2O + H(+). It functions in the pathway cofactor biosynthesis; pyridoxine 5'-phosphate biosynthesis; pyridoxine 5'-phosphate from D-erythrose 4-phosphate: step 5/5. Its function is as follows. Catalyzes the complicated ring closure reaction between the two acyclic compounds 1-deoxy-D-xylulose-5-phosphate (DXP) and 3-amino-2-oxopropyl phosphate (1-amino-acetone-3-phosphate or AAP) to form pyridoxine 5'-phosphate (PNP) and inorganic phosphate. This Prochlorococcus marinus (strain MIT 9312) protein is Pyridoxine 5'-phosphate synthase.